The sequence spans 600 residues: Integrator complex subunit 11 (600 aa).

Zn(2+) is bound by residues His68, His70, Asp72, His73, His157, and Asp178. An HXHXDH motif motif is present at residues 68-73 (HFHLDH). Glu203 is a catalytic residue. Lys381 is covalently cross-linked (Glycyl lysine isopeptide (Lys-Gly) (interchain with G-Cter in SUMO)). His414 lines the Zn(2+) pocket. Glycyl lysine isopeptide (Lys-Gly) (interchain with G-Cter in SUMO) cross-links involve residues Lys462 and Lys475. The Nuclear localization signal signature appears at 469 to 479 (LLPEAKKPRLL).

This sequence belongs to the metallo-beta-lactamase superfamily. RNA-metabolizing metallo-beta-lactamase-like family. INTS11 subfamily. Component of the Integrator complex, composed of core subunits INTS1, INTS2, INTS3, INTS4, INTS5, INTS6, INTS7, INTS8, INTS9/RC74, INTS10, INTS11/CPSF3L, INTS12, INTS13, INTS14 and INTS15. The core complex associates with protein phosphatase 2A subunits PPP2CA and PPP2R1A, to form the Integrator-PP2A (INTAC) complex. INTS11 is part of the RNA endonuclease subcomplex, composed of INTS4, INTS9, INTS11 and inositol hexakisphosphate (InsP6). Interacts with WDR73; interaction is required for the assembly of the RNA endonuclease subcomplex in the cytoplasm. Interacts with BRAT1; interaction is required for the assembly of the RNA endonuclease subcomplex and inhibits the endonuclease activity of INTS11 before formation of mature integrator complex. The cofactor is Zn(2+). In terms of processing, sumoylated; sumoylation regulates its subcellular location and is required for integrator complex integrity.

The protein resides in the nucleus. It localises to the cytoplasm. With respect to regulation, the RNA endonuclease activity is inhibited by BRAT1 that forms hyrogen bond and hydrophobic interactions with the active site. RNA endonuclease component of the integrator complex, a multiprotein complex that terminates RNA polymerase II (Pol II) transcription in the promoter-proximal region of genes. The integrator complex provides a quality checkpoint during transcription elongation by driving premature transcription termination of transcripts that are unfavorably configured for transcriptional elongation: the complex terminates transcription by (1) catalyzing dephosphorylation of the C-terminal domain (CTD) of Pol II subunit POLR2A/RPB1 and SUPT5H/SPT5, (2) degrading the exiting nascent RNA transcript via endonuclease activity and (3) promoting the release of Pol II from bound DNA. The integrator complex is also involved in terminating the synthesis of non-coding Pol II transcripts, such as enhancer RNAs (eRNAs), small nuclear RNAs (snRNAs), telomerase RNAs and long non-coding RNAs (lncRNAs). Within the integrator complex, INTS11 constitutes the RNA endonuclease subunit that degrades exiting nascent RNA transcripts. Mediates recruitment of cytoplasmic dynein to the nuclear envelope, probably as component of the integrator complex. This is Integrator complex subunit 11 from Mus musculus (Mouse).